Reading from the N-terminus, the 662-residue chain is Intracellular exo-alpha-(1-&gt;5)-L-arabinofuranosidase (662 aa).

Alpha-L-arabinofuranose is bound by residues Glu-27, Asn-72, and Asn-174. Catalysis depends on Glu-175, which acts as the Proton donor/acceptor. 3 residues coordinate alpha-L-arabinofuranose: Tyr-246, Glu-294, and Gln-352. Glu-294 (nucleophile) is an active-site residue. 3 disordered regions span residues 454–483 (LADADPDARNTLAEPERVVPHPVDGTSLRD), 497–548 (SIRC…RTAR), and 588–662 (WTRW…ARRC). Residues 519 to 533 (TGTPPAAPPSSSSAP) show a composition bias toward low complexity. Residues 537-547 (PTARRSPDRTA) show a composition bias toward basic and acidic residues. 3 stretches are compositionally biased toward low complexity: residues 590–603 (RWAPAPRSGSPSRR), 628–641 (RRSPPGSAPGTPAP), and 649–662 (AGASRGAPRTARRC).

The protein belongs to the glycosyl hydrolase 51 family. Homohexamer; trimer of dimers.

The protein localises to the cytoplasm. It catalyses the reaction Hydrolysis of terminal non-reducing alpha-L-arabinofuranoside residues in alpha-L-arabinosides.. The protein operates within glycan metabolism; L-arabinan degradation. In terms of biological role, involved in the degradation of arabinan and is a key enzyme in the complete degradation of the plant cell wall. Catalyzes the cleavage of terminal alpha-(1-&gt;5)-arabinofuranosyl bonds in different hemicellulosic homopolysaccharides (arabino-oligoxylosides, branched and debranched arabinans). It acts rapidly on the short-chain arabino-oligoxylosides from digestion of xylan with xylanases. It hydrolyzes slowly arabinan and arabinoxylan from wheat and rye flour. This Streptomyces lividans protein is Intracellular exo-alpha-(1-&gt;5)-L-arabinofuranosidase.